Here is a 216-residue protein sequence, read N- to C-terminus: MSNTGITLALSKGRIFDETLPLLAAAGITPAESPESSRKLIIGTNRDDVRLIIVRASDVPTYVQYGAADLGIAGKDVLNEHGGRGLYQPLDLQIAKCRMMVAVREGYDYAGTVKQGARIRVATKYVNAARDHFASKGVHIDLIKLYGSMELAPLVGLSDVIVDLVSTGGTLKANGLAAVEHICDISSRLVVNQAALKLKRSVIQPVVDAFAAAVAR.

The protein belongs to the ATP phosphoribosyltransferase family. Short subfamily. Heteromultimer composed of HisG and HisZ subunits.

It localises to the cytoplasm. The enzyme catalyses 1-(5-phospho-beta-D-ribosyl)-ATP + diphosphate = 5-phospho-alpha-D-ribose 1-diphosphate + ATP. Its pathway is amino-acid biosynthesis; L-histidine biosynthesis; L-histidine from 5-phospho-alpha-D-ribose 1-diphosphate: step 1/9. Catalyzes the condensation of ATP and 5-phosphoribose 1-diphosphate to form N'-(5'-phosphoribosyl)-ATP (PR-ATP). Has a crucial role in the pathway because the rate of histidine biosynthesis seems to be controlled primarily by regulation of HisG enzymatic activity. The sequence is that of ATP phosphoribosyltransferase from Thiobacillus denitrificans (strain ATCC 25259 / T1).